The following is a 302-amino-acid chain: Oxygen-dependent coproporphyrinogen-III oxidase (302 aa).

Serine 90 provides a ligand contact to substrate. A divalent metal cation contacts are provided by histidine 94 and histidine 104. Histidine 104 acts as the Proton donor in catalysis. 106-108 (NVR) is a binding site for substrate. The a divalent metal cation site is built by histidine 143 and histidine 173. Positions 238–273 (YVEFNLIYDRGTIFGLQSNGRTESILLSMPPIVKWR) are important for dimerization.

It belongs to the aerobic coproporphyrinogen-III oxidase family. As to quaternary structure, homodimer. It depends on a divalent metal cation as a cofactor.

The protein resides in the cytoplasm. The enzyme catalyses coproporphyrinogen III + O2 + 2 H(+) = protoporphyrinogen IX + 2 CO2 + 2 H2O. It functions in the pathway porphyrin-containing compound metabolism; protoporphyrin-IX biosynthesis; protoporphyrinogen-IX from coproporphyrinogen-III (O2 route): step 1/1. Its function is as follows. Involved in the heme biosynthesis. Catalyzes the aerobic oxidative decarboxylation of propionate groups of rings A and B of coproporphyrinogen-III to yield the vinyl groups in protoporphyrinogen-IX. The protein is Oxygen-dependent coproporphyrinogen-III oxidase of Methylobacillus flagellatus (strain ATCC 51484 / DSM 6875 / VKM B-1610 / KT).